A 1157-amino-acid chain; its full sequence is MPPPPRLLFLLVMLLVVAAPGAPVFGANAPPEVKAEIDALLMFRSGLRDPYAAMSGWNASSPSAPCSWRGVACAAGTGRVVELALPKLRLSGAISPALSSLVYLEKLSLRSNSLSGTIPASLSRISSLRAVYLQYNSLSGPIPQSFLANLTNLQTFDVSGNLLSGPVPVSFPPSLKYLDLSSNAFSGTIPANVSASATSLQFLNLSFNRLRGTVPASLGTLQDLHYLWLDGNLLEGTIPSALSNCSALLHLSLQGNALRGILPPAVAAIPSLQILSVSRNRLTGAIPAAAFGGVGNSSLRIVQVGGNAFSQVDVPVSLGKDLQVVDLRANKLAGPFPSWLAGAGGLTVLDLSGNAFTGEVPPAVGQLTALQELRLGGNAFTGTVPAEIGRCGALQVLDLEDNRFSGEVPAALGGLRRLREVYLGGNSFSGQIPASLGNLSWLEALSTPGNRLTGDLPSELFVLGNLTFLDLSDNKLAGEIPPSIGNLAALQSLNLSGNSFSGRIPSNIGNLLNLRVLDLSGQKNLSGNLPAELFGLPQLQYVSLAGNSFSGDVPEGFSSLWSLRHLNLSVNSFTGSMPATYGYLPSLQVLSASHNRICGELPVELANCSNLTVLDLRSNQLTGPIPGDFARLGELEELDLSHNQLSRKIPPEISNCSSLVTLKLDDNHLGGEIPASLSNLSKLQTLDLSSNNLTGSIPASLAQIPGMLSLNVSQNELSGEIPAMLGSRFGTPSVFASNPNLCGPPLENECSAYRQHRRRQRLQRLALLIGVVAATVLLLVLFCCCCVYSLLRWRRRFIEKRDGVKKRRRSPGRGSGSSGTSTDSVSQPKLIMFNSRITYADTVEATRQFDEENVLSRGRHGLVFKACYNDGTVLAILRLPSTSSDGAVVIEEGSFRKEAESLGKVKHRNLTVLRGYYAGPPPDVRLLVYDYMPNGNLATLLQEASHQDGHILNWPMRHLIALGVSRGLAFLHQSGVVHGDVKPQNILFDADFEPHLSDFGLEPMVVTAGAAAAAAAASTSATTTVGSLGYVAPDAAAAGQATREGDVYSFGIVLLELLTGRRPGMFAGEDEDIVKWVKRQLQRGAVAELLEPGLLELDPESSEWEEFLLGIKVGLLCTAPDPLDRPAMGDVVFMLEGCRVGPDIPSSADPTSQPSPA.

Residues 1-21 form the signal peptide; that stretch reads MPPPPRLLFLLVMLLVVAAPG. N-linked (GlcNAc...) asparagine glycosylation occurs at Asn58. 26 LRR repeats span residues 101–125, 127–149, 150–172, 173–196, 198–220, 221–245, 247–269, 270–293, 296–319, 320–343, 344–367, 368–391, 393–414, 415–439, 440–463, 464–487, 489–511, 513–536, 537–559, 561–583, 584–608, 609–631, 632–656, 658–680, 681–704, and 706–728; these read LVYLEKLSLRSNSLSGTIPASLSRI, SLRAVYLQYNSLSGPIPQSFLAN, LTNLQTFDVSGNLLSGPVPVSFP, PSLKYLDLSSNAFSGTIPANVSAS, TSLQFLNLSFNRLRGTVPASLGT, LQDLHYLWLDGNLLEGTIPSALSNC, ALLHLSLQGNALRGILPPAVAAI, PSLQILSVSRNRLTGAIPAAAFGG, NSSLRIVQVGGNAFSQVDVPVSLG, KDLQVVDLRANKLAGPFPSWLAGA, GGLTVLDLSGNAFTGEVPPAVGQL, TALQELRLGGNAFTGTVPAEIGRC, ALQVLDLEDNRFSGEVPAALGG, LRRLREVYLGGNSFSGQIPASLGNL, SWLEALSTPGNRLTGDLPSELFVL, GNLTFLDLSDNKLAGEIPPSIGNL, ALQSLNLSGNSFSGRIPSNIGNL, NLRVLDLSGQKNLSGNLPAELFGL, PQLQYVSLAGNSFSGDVPEGFSS, WSLRHLNLSVNSFTGSMPATYGY, LPSLQVLSASHNRICGELPVELANC, SNLTVLDLRSNQLTGPIPGDFAR, LGELEELDLSHNQLSRKIPPEISNC, SLVTLKLDDNHLGGEIPASLSNL, SKLQTLDLSSNNLTGSIPASLAQI, and GMLSLNVSQNELSGEIPAMLGSR. The N-linked (GlcNAc...) asparagine glycan is linked to Asn149. Residues Asn192, Asn204, and Asn244 are each glycosylated (N-linked (GlcNAc...) asparagine). Asn296 is a glycosylation site (N-linked (GlcNAc...) asparagine). The N-linked (GlcNAc...) asparagine glycan is linked to Asn438. Asn465, Asn494, and Asn524 each carry an N-linked (GlcNAc...) asparagine glycan. 7 N-linked (GlcNAc...) asparagine glycosylation sites follow: Asn567, Asn607, Asn610, Asn655, Asn679, Asn692, and Asn711. Residues 765 to 785 form a helical membrane-spanning segment; sequence LALLIGVVAATVLLLVLFCCC. A disordered region spans residues 804 to 825; the sequence is VKKRRRSPGRGSGSSGTSTDSV. Positions 849-1144 constitute a Protein kinase domain; sequence FDEENVLSRG…LEGCRVGPDI (296 aa). ATP-binding positions include 855–863, 930–932, 936–939, 980–985, and Asp998; these read LSRGRHGLV, DYM, NLAT, and DVKPQN.

It belongs to the protein kinase superfamily. Ser/Thr protein kinase family. In terms of tissue distribution, expressed in developing culm, coleoptile, primary root, young spikelet, young leaf blade and leaf sheath, floral meristem primordia, stamen primordia, and lemma and palea primordia.

The protein resides in the cell membrane. Its function is as follows. Functions in the early stages of organ development by regulating cell division rate. Is probably involved in the regulation of a number of cell-cycle genes. May act as regulator of brassinosteroid (BR) signaling and cell-cycle controlling organ growth. The sequence is that of Probable inactive leucine-rich repeat receptor kinase XIAO from Oryza sativa subsp. japonica (Rice).